We begin with the raw amino-acid sequence, 140 residues long: Large ribosomal subunit protein bL17 (140 aa).

Positions 121-140 (AAKGLDSGPTAEANDDDSEE) are disordered.

The protein belongs to the bacterial ribosomal protein bL17 family. In terms of assembly, part of the 50S ribosomal subunit. Contacts protein L32.

This is Large ribosomal subunit protein bL17 from Rhodospirillum rubrum (strain ATCC 11170 / ATH 1.1.1 / DSM 467 / LMG 4362 / NCIMB 8255 / S1).